A 1240-amino-acid polypeptide reads, in one-letter code: DNA polymerase catalytic subunit (1240 aa).

A compositionally biased stretch (low complexity) spans 1 to 22; the sequence is MFCAAGGPASPGGKPAARAASG. 3 disordered regions span residues 1–44, 646–695, and 1103–1139; these read MFCA…RRQN, GLDK…RETG, and AAAPGDEPAPPAALPSPAKRPRETPSHADPPGGASKP. Acidic residues predominate over residues 669-688; sequence NGDEDKDDDEDGDEDGDERE.

The protein belongs to the DNA polymerase type-B family. In terms of assembly, forms a complex with the ssDNA-binding protein UL29, the DNA polymerase processivity factor, and the alkaline exonuclease. Interacts with the putative helicase-primase complex subunit UL8; this interaction may coordinate leading and lagging strand DNA synthesis at the replication fork.

It localises to the host nucleus. It catalyses the reaction DNA(n) + a 2'-deoxyribonucleoside 5'-triphosphate = DNA(n+1) + diphosphate. The enzyme catalyses Endonucleolytic cleavage to 5'-phosphomonoester.. Functionally, replicates viral genomic DNA. The replication complex is composed of six viral proteins: the DNA polymerase, processivity factor, primase, primase-associated factor, helicase, and ssDNA-binding protein. Additionally, the polymerase contains an intrinsic ribonuclease H (RNase H) activity that specifically degrades RNA/DNA heteroduplexes or duplex DNA substrates in the 5' to 3' direction. Therefore, it can catalyze the excision of the RNA primers that initiate the synthesis of Okazaki fragments at a replication fork during viral DNA replication. The protein is DNA polymerase catalytic subunit of Human herpesvirus 2 (strain HG52) (HHV-2).